The chain runs to 391 residues: Histamine H4 receptor (391 aa).

The Extracellular segment spans residues 1–19 (MSESNSTGILPPAAQVPLA). N-linked (GlcNAc...) asparagine glycosylation is present at Asn-5. The helical transmembrane segment at 20–40 (FLMSSFAFAIMVGNAVVILAF) threads the bilayer. Residues 41–52 (VVDRNLRHRSNY) lie on the Cytoplasmic side of the membrane. A helical membrane pass occupies residues 53-73 (FFLNLAISDFLVGLISIPLYI). Residues 74 to 87 (PHVLFNWNFGSGIC) are Extracellular-facing. A disulfide bridge links Cys-87 with Cys-166. Residues 88–108 (MFWLITDYLLCTASVYNIVLI) form a helical membrane-spanning segment. The Cytoplasmic portion of the chain corresponds to 109-131 (SYDRYQSVSNAVSYRAQHTGIMK). The helical transmembrane segment at 132–152 (IVAQMVAVWILAFLVNGPMIL) threads the bilayer. The Extracellular segment spans residues 153-174 (ASDSWKNSTNTKDCEPGFVTEW). An N-linked (GlcNAc...) asparagine glycan is attached at Asn-159. A helical transmembrane segment spans residues 175 to 195 (YILTITMLLEFLLPVISVAYF). Topologically, residues 196–306 (NVQIYWSLWK…LLRGRKLARS (111 aa)) are cytoplasmic. Residues 238 to 258 (TSNPGLKESAASRHSESPRRK) are disordered. The segment covering 247 to 256 (AASRHSESPR) has biased composition (basic and acidic residues). The helical transmembrane segment at 307–327 (LAILLSAFAICWAPYCLFTIV) threads the bilayer. Topologically, residues 328 to 343 (LSTYPRTERPKSVWYS) are extracellular. The chain crosses the membrane as a helical span at residues 344 to 364 (IAFWLQWFNSFVNPFLYPLCH). Over 365–391 (RRFQKAFWKILCVTKQPALSQNQSVSS) the chain is Cytoplasmic.

This sequence belongs to the G-protein coupled receptor 1 family. As to quaternary structure, interacts with TSPAN4.

It is found in the cell membrane. In terms of biological role, the H4 subclass of histamine receptors could mediate the histamine signals in peripheral tissues. Displays a significant level of constitutive activity (spontaneous activity in the absence of agonist). This Mus musculus (Mouse) protein is Histamine H4 receptor (Hrh4).